The sequence spans 709 residues: Probable serine/threonine-protein kinase zyg-1 (709 aa).

The region spanning 13–251 (FQNLQQIGQG…LKEIVMTDYV (239 aa)) is the Protein kinase domain. Residues 19–27 (IGQGGFGVV) and Lys-41 contribute to the ATP site. The Proton acceptor role is filled by Asp-130. 2 disordered regions span residues 254-329 (KMGE…DRAR) and 591-633 (SSSQ…PAAT). 2 stretches are compositionally biased toward basic and acidic residues: residues 262-291 (SREH…ERRP) and 302-313 (SRRDPDGYRAAH). The segment covering 607–627 (PLSSRTTSSLNVRNGVSSDEN) has biased composition (polar residues).

The protein belongs to the protein kinase superfamily. Ser/Thr protein kinase family.

The protein resides in the cytoplasm. It is found in the cytoskeleton. It localises to the microtubule organizing center. The protein localises to the centrosome. Its subcellular location is the centriole. The enzyme catalyses L-seryl-[protein] + ATP = O-phospho-L-seryl-[protein] + ADP + H(+). It carries out the reaction L-threonyl-[protein] + ATP = O-phospho-L-threonyl-[protein] + ADP + H(+). In terms of biological role, protein kinase that plays a central role in centrosome duplication. Paternal copy is required to regulate synthesis of daughter centrioles prior to fertilization. Maternal copy regulates centrosome duplication during later cell cycles. Functions upstream of sas-5 and sas-6, and is required for their localization to the centrosome. The polypeptide is Probable serine/threonine-protein kinase zyg-1 (zyg-1) (Caenorhabditis briggsae).